The following is a 143-amino-acid chain: MSDVEEVVEVQEETVVEQTAEVTIEDALKVVLRTALVHDGLARGLRESTKALTRGEALLVVLVSSVTEANIIKLVEGLANDPENKVPLIKVADAKQLGEWAGLGKIDREGNARKVVGASVVVVKNWGAETDELSMIMEHFSQQ.

Residues lysine 85, lysine 95, and lysine 114 each participate in a glycyl lysine isopeptide (Lys-Gly) (interchain with G-Cter in ubiquitin) cross-link.

The protein belongs to the eukaryotic ribosomal protein eS12 family. Component of the small ribosomal subunit (SSU). Mature yeast ribosomes consist of a small (40S) and a large (60S) subunit. The 40S small subunit contains 1 molecule of ribosomal RNA (18S rRNA) and 33 different proteins (encoded by 57 genes). The large 60S subunit contains 3 rRNA molecules (25S, 5.8S and 5S rRNA) and 46 different proteins (encoded by 81 genes).

It is found in the cytoplasm. Component of the ribosome, a large ribonucleoprotein complex responsible for the synthesis of proteins in the cell. The small ribosomal subunit (SSU) binds messenger RNAs (mRNAs) and translates the encoded message by selecting cognate aminoacyl-transfer RNA (tRNA) molecules. The large subunit (LSU) contains the ribosomal catalytic site termed the peptidyl transferase center (PTC), which catalyzes the formation of peptide bonds, thereby polymerizing the amino acids delivered by tRNAs into a polypeptide chain. The nascent polypeptides leave the ribosome through a tunnel in the LSU and interact with protein factors that function in enzymatic processing, targeting, and the membrane insertion of nascent chains at the exit of the ribosomal tunnel. The sequence is that of Small ribosomal subunit protein eS12 from Saccharomyces cerevisiae (strain ATCC 204508 / S288c) (Baker's yeast).